A 492-amino-acid polypeptide reads, in one-letter code: E3 ubiquitin-protein ligase TRIM35 (492 aa).

M1 is modified (N-acetylmethionine). Phosphoserine occurs at positions 4 and 8. An RING-type zinc finger spans residues 21-61 (CAVCYDPFRDAVTLRCGHNFCRGCVSRCWEVQVSPTCPVCK). Residues 96-137 (RFSRVCRLHRGQLSLFCLEDKELLCCSCQADPRHQGHRVQPV) form a B box-type zinc finger. C101, H104, C123, and H129 together coordinate Zn(2+). Residues 210-249 (AEETRQKQLLADEKMKQLTEETEVLAHEIERLQMEMKEDD) are a coiled coil. A B30.2/SPRY domain is found at 283–486 (YLGSLQYRVW…LRICPLHISV (204 aa)).

Interacts with PKM isoform M2, but not isoform M1; this interaction may compete with that between PKM and FGFR1, and hence reduces FGFR1-dependent tyrosine phosphorylation of PKM. Interacts with IRF7; this interaction promotes IRF7 proteasomal degradation. Interacts with TRAF3; this interaction promotes TRAF3 activation.

It localises to the cytoplasm. The protein resides in the nucleus. The catalysed reaction is S-ubiquitinyl-[E2 ubiquitin-conjugating enzyme]-L-cysteine + [acceptor protein]-L-lysine = [E2 ubiquitin-conjugating enzyme]-L-cysteine + N(6)-ubiquitinyl-[acceptor protein]-L-lysine.. It participates in protein modification; protein ubiquitination. Functionally, E3 ubiquitin-protein ligase that participates in multiple biological processes including cell death, glucose metabolism, and in particular, the innate immune response. Mediates 'Lys-63'-linked polyubiquitination of TRAF3 thereby promoting type I interferon production via RIG-I signaling pathway. Can also catalyze 'Lys-48'-linked polyubiquitination and proteasomal degradation of viral proteins such as influenza virus PB2. Acts as a negative feedback regulator of TLR7- and TLR9-triggered signaling. Mechanistically, promotes the 'Lys-48'-linked ubiquitination of IRF7 and induces its degradation via a proteasome-dependent pathway. Reduces FGFR1-dependent tyrosine phosphorylation of PKM, inhibiting PKM-dependent lactate production, glucose metabolism, and cell growth. This Pongo abelii (Sumatran orangutan) protein is E3 ubiquitin-protein ligase TRIM35 (TRIM35).